Reading from the N-terminus, the 620-residue chain is 1-deoxy-D-xylulose-5-phosphate synthase (620 aa).

Residues His-80 and 121-123 (GHS) each bind thiamine diphosphate. Asp-152 provides a ligand contact to Mg(2+). Thiamine diphosphate-binding positions include 153–154 (GA), Asn-181, Tyr-288, and Glu-370. A Mg(2+)-binding site is contributed by Asn-181.

The protein belongs to the transketolase family. DXPS subfamily. In terms of assembly, homodimer. Mg(2+) is required as a cofactor. Thiamine diphosphate serves as cofactor.

It catalyses the reaction D-glyceraldehyde 3-phosphate + pyruvate + H(+) = 1-deoxy-D-xylulose 5-phosphate + CO2. It participates in metabolic intermediate biosynthesis; 1-deoxy-D-xylulose 5-phosphate biosynthesis; 1-deoxy-D-xylulose 5-phosphate from D-glyceraldehyde 3-phosphate and pyruvate: step 1/1. In terms of biological role, catalyzes the acyloin condensation reaction between C atoms 2 and 3 of pyruvate and glyceraldehyde 3-phosphate to yield 1-deoxy-D-xylulose-5-phosphate (DXP). In Escherichia coli (strain SMS-3-5 / SECEC), this protein is 1-deoxy-D-xylulose-5-phosphate synthase.